A 730-amino-acid polypeptide reads, in one-letter code: ATP-binding cassette sub-family D member 1 (730 aa).

A run of 4 helical transmembrane segments spans residues 24-44 (AFSY…VTIP), 137-157 (FCLI…GALV), 169-189 (ALVL…NSMI), and 276-296 (ANII…AHIL). Positions 136-373 (TFCLISRTFL…WFIMLEQFFM (238 aa)) constitute an ABC transmembrane type-1 domain. Positions 505 to 727 (ISLRAVPVVT…MNSDEEQKGQ (223 aa)) constitute an ABC transporter domain. Position 538–545 (538–545 (GPNGCGKS)) interacts with ATP.

This sequence belongs to the ABC transporter superfamily. ABCD family. Peroxisomal fatty acyl CoA transporter (TC 3.A.1.203) subfamily.

The protein resides in the peroxisome membrane. The enzyme catalyses an acyl-CoA(out) + ATP + H2O = an acyl-CoA(in) + ADP + phosphate + H(+). Its function is as follows. Plays a role in the transport of free very-long-chain fatty acids (VLCFAs) as well as their CoA-esters across the peroxisomal membrane by acting as an ATP-specific binding subunit releasing ADP after ATP hydrolysis. Thus, plays a role in regulation of VLCFAs and energy metabolism namely, in the degradation and biosynthesis of fatty acids by beta-oxidation, mitochondrial function and microsomal fatty acid elongation. In Drosophila melanogaster (Fruit fly), this protein is ATP-binding cassette sub-family D member 1.